Consider the following 274-residue polypeptide: Cytochrome c oxidase subunit 3 (274 aa).

7 consecutive transmembrane segments (helical) span residues 22–42, 47–67, 93–113, 137–157, 170–190, 208–228, and 248–268; these read PSPW…GGVM, FAAG…SMLL, GVVL…WAFF, PFEV…TITV, TILY…LQWV, FFVA…FLTV, and AAIW…VSVY.

Belongs to the cytochrome c oxidase subunit 3 family. As to quaternary structure, component of the cytochrome c oxidase (complex IV, CIV), a multisubunit enzyme composed of a catalytic core of 3 subunits and several supernumerary subunits. The complex exists as a monomer or a dimer and forms supercomplexes (SCs) in the inner mitochondrial membrane with ubiquinol-cytochrome c oxidoreductase (cytochrome b-c1 complex, complex III, CIII).

It is found in the mitochondrion inner membrane. It carries out the reaction 4 Fe(II)-[cytochrome c] + O2 + 8 H(+)(in) = 4 Fe(III)-[cytochrome c] + 2 H2O + 4 H(+)(out). Functionally, component of the cytochrome c oxidase, the last enzyme in the mitochondrial electron transport chain which drives oxidative phosphorylation. The respiratory chain contains 3 multisubunit complexes succinate dehydrogenase (complex II, CII), ubiquinol-cytochrome c oxidoreductase (cytochrome b-c1 complex, complex III, CIII) and cytochrome c oxidase (complex IV, CIV), that cooperate to transfer electrons derived from NADH and succinate to molecular oxygen, creating an electrochemical gradient over the inner membrane that drives transmembrane transport and the ATP synthase. Cytochrome c oxidase is the component of the respiratory chain that catalyzes the reduction of oxygen to water. Electrons originating from reduced cytochrome c in the intermembrane space (IMS) are transferred via the dinuclear copper A center (CU(A)) of subunit 2 and heme A of subunit 1 to the active site in subunit 1, a binuclear center (BNC) formed by heme A3 and copper B (CU(B)). The BNC reduces molecular oxygen to 2 water molecules using 4 electrons from cytochrome c in the IMS and 4 protons from the mitochondrial matrix. This is Cytochrome c oxidase subunit 3 (COX3) from Allomyces macrogynus.